Consider the following 287-residue polypeptide: Putative sugar uptake protein spyM18_2243 (287 aa).

10 helical membrane-spanning segments follow: residues Ile-4–Gly-26, Leu-33–Val-50, Thr-55–Gly-72, Val-85–Val-107, Phe-117–Ser-134, Phe-154–Phe-171, Ser-181–Phe-200, Tyr-207–Ala-229, Leu-234–Leu-256, and Val-268–Val-285.

Belongs to the GRP transporter (TC 2.A.7.5) family.

It localises to the cell membrane. The chain is Putative sugar uptake protein spyM18_2243 from Streptococcus pyogenes serotype M18 (strain MGAS8232).